Reading from the N-terminus, the 74-residue chain is Large ribosomal subunit protein bL31 (74 aa).

It belongs to the bacterial ribosomal protein bL31 family. Type A subfamily. In terms of assembly, part of the 50S ribosomal subunit.

In terms of biological role, binds the 23S rRNA. In Chlorobaculum parvum (strain DSM 263 / NCIMB 8327) (Chlorobium vibrioforme subsp. thiosulfatophilum), this protein is Large ribosomal subunit protein bL31.